A 305-amino-acid polypeptide reads, in one-letter code: Putative lipid kinase SAS0691 (305 aa).

The DAGKc domain occupies 3-139; the sequence is NKYTHGVLFY…YDVIKINNQY (137 aa). Residues S44, 74–80, and T101 contribute to the ATP site; that span reads GDGTVNE. The Mg(2+) site is built by S220, D223, and E225. The Proton acceptor role is filled by E281.

It belongs to the diacylglycerol/lipid kinase family. The cofactor is Mg(2+).

Its function is as follows. May catalyze the ATP-dependent phosphorylation of lipids other than diacylglycerol (DAG). The polypeptide is Putative lipid kinase SAS0691 (Staphylococcus aureus (strain MSSA476)).